The following is a 388-amino-acid chain: Succinate--CoA ligase [ADP-forming] subunit beta (388 aa).

The region spanning 9 to 244 (KQLFQKYGVP…LDEEDPFEIE (236 aa)) is the ATP-grasp domain. ATP contacts are provided by residues K46, 53-55 (GRG), E99, L102, and E107. Mg(2+)-binding residues include N199 and D213. Residues N265 and 322–324 (GIL) each bind substrate.

This sequence belongs to the succinate/malate CoA ligase beta subunit family. As to quaternary structure, heterotetramer of two alpha and two beta subunits. Mg(2+) is required as a cofactor.

The catalysed reaction is succinate + ATP + CoA = succinyl-CoA + ADP + phosphate. It carries out the reaction GTP + succinate + CoA = succinyl-CoA + GDP + phosphate. It functions in the pathway carbohydrate metabolism; tricarboxylic acid cycle; succinate from succinyl-CoA (ligase route): step 1/1. In terms of biological role, succinyl-CoA synthetase functions in the citric acid cycle (TCA), coupling the hydrolysis of succinyl-CoA to the synthesis of either ATP or GTP and thus represents the only step of substrate-level phosphorylation in the TCA. The beta subunit provides nucleotide specificity of the enzyme and binds the substrate succinate, while the binding sites for coenzyme A and phosphate are found in the alpha subunit. This Syntrophobacter fumaroxidans (strain DSM 10017 / MPOB) protein is Succinate--CoA ligase [ADP-forming] subunit beta.